We begin with the raw amino-acid sequence, 483 residues long: NADH-quinone oxidoreductase subunit N (483 aa).

Transmembrane regions (helical) follow at residues 7–27 (AILT…LGAV), 33–53 (ALAS…AFYI), 76–96 (FAKI…QDYM), 108–128 (VLII…DLIA), 161–181 (FVLG…AYGF), 196–216 (GGDM…GLAF), 235–255 (PTPI…ALFA), 272–292 (IVAF…IGQT), 297–317 (LMAY…SAGT), 323–343 (AMLI…AFIL), 369–389 (ALAI…LGFF), 402–422 (GLVW…FYYI), and 442–462 (MGLV…LGWV).

It belongs to the complex I subunit 2 family. NDH-1 is composed of 14 different subunits. Subunits NuoA, H, J, K, L, M, N constitute the membrane sector of the complex.

It is found in the cell inner membrane. The catalysed reaction is a quinone + NADH + 5 H(+)(in) = a quinol + NAD(+) + 4 H(+)(out). Functionally, NDH-1 shuttles electrons from NADH, via FMN and iron-sulfur (Fe-S) centers, to quinones in the respiratory chain. The immediate electron acceptor for the enzyme in this species is believed to be ubiquinone. Couples the redox reaction to proton translocation (for every two electrons transferred, four hydrogen ions are translocated across the cytoplasmic membrane), and thus conserves the redox energy in a proton gradient. This Jannaschia sp. (strain CCS1) protein is NADH-quinone oxidoreductase subunit N.